Here is a 276-residue protein sequence, read N- to C-terminus: Non-heme chloroperoxidase (276 aa).

Residues 24–254 (PVVFHHGWPL…NATLKSYEGL (231 aa)) enclose the AB hydrolase-1 domain. Residues S97, D227, and H256 contribute to the active site.

It belongs to the AB hydrolase superfamily. Bacterial non-heme haloperoxidase / perhydrolase family. In terms of assembly, homodimer.

The polypeptide is Non-heme chloroperoxidase (cpo) (Streptomyces lividans).